The chain runs to 275 residues: Melanoma-associated antigen B5 (275 aa).

The segment at 1–33 (MTSAGVFNAGSDERANSRDEEYPCSSEVSPSTE) is disordered. Residues 11-21 (SDERANSRDEE) are compositionally biased toward basic and acidic residues. The span at 23–33 (PCSSEVSPSTE) shows a compositional bias: low complexity. One can recognise an MAGE domain in the interval 40-239 (INIKVGLLEQ…GAFSSQYEEA (200 aa)).

In terms of tissue distribution, expressed in testis. Not expressed in other normal tissues, but is expressed in tumors of different histological origins.

The polypeptide is Melanoma-associated antigen B5 (MAGEB5) (Homo sapiens (Human)).